The following is a 173-amino-acid chain: Lens fiber membrane intrinsic protein (173 aa).

Topologically, residues 1-3 (MYS) are cytoplasmic. Residues 4–24 (FMGGGLFCAWVGTILLVVATA) traverse the membrane as a helical segment. Over 25–66 (TDHWMQYRLSGAFAHQGLWRYCLGTKCYLQTESIAYWNATRA) the chain is Extracellular. C-linked (Man) tryptophan; partial glycans are attached at residues tryptophan 43 and tryptophan 61. The chain crosses the membrane as a helical span at residues 67 to 87 (FMILSSLCATSGIIMGIVAFA). Over 88-98 (QQPTFTRLSRP) the chain is Cytoplasmic. The chain crosses the membrane as a helical span at residues 99–119 (FSAGIMFFASTFFVLLALAIY). At 120 to 140 (TGVTVSFLGRRFGDWRFSWSY) the chain is on the extracellular side. The helical transmembrane segment at 141–161 (ILGWVALLMTFFAGIFYMCAY) threads the bilayer. Residues 162–173 (RMHECRRLSTPR) are Cytoplasmic-facing. Serine 170 carries the post-translational modification Phosphoserine. At threonine 171 the chain carries Phosphothreonine.

Belongs to the PMP-22/EMP/MP20 family. In terms of assembly, seems to be associated with itself or another lens membrane component via disulfide bonds. Post-translationally, predominantly monophosphorylated on Ser-170. Only about 15% diphosphorylated on both Ser-170 and Thr-171. C-glycosylated. Trp-43 is more extensively C-glycosylated than Trp-61. C-glycosylation may be involved in membrane trafficking. In terms of tissue distribution, eye lens specific.

Its subcellular location is the membrane. Functionally, present in the thicker 16-17 nm junctions of mammalian lens fiber cells, where it may contribute to cell junctional organization. Acts as a receptor for calmodulin. May play an important role in both lens development and cataractogenesis. The polypeptide is Lens fiber membrane intrinsic protein (LIM2) (Bos taurus (Bovine)).